The chain runs to 144 residues: Prefoldin subunit alpha (144 aa).

It belongs to the prefoldin alpha subunit family. As to quaternary structure, heterohexamer of two alpha and four beta subunits.

Its subcellular location is the cytoplasm. Its function is as follows. Molecular chaperone capable of stabilizing a range of proteins. Seems to fulfill an ATP-independent, HSP70-like function in archaeal de novo protein folding. The sequence is that of Prefoldin subunit alpha from Metallosphaera sedula (strain ATCC 51363 / DSM 5348 / JCM 9185 / NBRC 15509 / TH2).